A 311-amino-acid polypeptide reads, in one-letter code: Systemic RNA interference defective protein 2 (311 aa).

Positions 1–20 (MPRFVYFCFALIALLPISWT) are cleaved as a signal peptide. Residues 21–188 (MDGILITDVE…EETKTVVNKN (168 aa)) are Extracellular-facing. The helical transmembrane segment at 189–209 (GGAVAVAVIEGIALIAILAFL) threads the bilayer. Topologically, residues 210–311 (GYRTMVNHKL…NDPFATLESW (102 aa)) are cytoplasmic. The segment covering 287 to 301 (NSSAAQPSTTSNGQF) has biased composition (polar residues). A disordered region spans residues 287-311 (NSSAAQPSTTSNGQFNDPFATLESW).

In terms of tissue distribution, expressed in the intestinal lumen. Also present, at lower levels, in the excretory duct cells.

It is found in the apical cell membrane. It localises to the cytoplasm. Its function is as follows. Plays a role in RNA-mediated gene silencing by mediating endocytic uptake of double-stranded RNA (dsRNA) ingested from the environment into intestinal cells from the intestinal lumen. Selective for dsRNAs of at least 50 bp. Required for avoidance behavior induced by small RNAs derived from pathogenic bacteria such as P.aeruginosa. This chain is Systemic RNA interference defective protein 2, found in Caenorhabditis elegans.